A 177-amino-acid polypeptide reads, in one-letter code: Large ribosomal subunit protein uL10 (177 aa).

Belongs to the universal ribosomal protein uL10 family. In terms of assembly, part of the ribosomal stalk of the 50S ribosomal subunit. The N-terminus interacts with L11 and the large rRNA to form the base of the stalk. The C-terminus forms an elongated spine to which L12 dimers bind in a sequential fashion forming a multimeric L10(L12)X complex.

Its function is as follows. Forms part of the ribosomal stalk, playing a central role in the interaction of the ribosome with GTP-bound translation factors. The protein is Large ribosomal subunit protein uL10 of Caldanaerobacter subterraneus subsp. tengcongensis (strain DSM 15242 / JCM 11007 / NBRC 100824 / MB4) (Thermoanaerobacter tengcongensis).